The following is a 226-amino-acid chain: MKPFLNDSWWAVMKSEFEQPYYQELREWMKEEYRTQTVFPKPDDVYRALHLTSYEEVKVVILGQDPYHGPGQAHGLSFSVQPGVKHPPSLRNIFQELKDDLGCPVPNHGSLVSWAEQGVLLLNTVLTVRKGEANSHKGKGWERVTDRVIDALNERDQPVVFVLWGRHAQNKKERIDQNKHYIIESPHPSPFSARNGFFGSRPFSKVNAYLKQMGTEEINWCIQDIE.

Residue Asp65 is the Proton acceptor of the active site.

The protein belongs to the uracil-DNA glycosylase (UDG) superfamily. UNG family.

It localises to the cytoplasm. It catalyses the reaction Hydrolyzes single-stranded DNA or mismatched double-stranded DNA and polynucleotides, releasing free uracil.. In terms of biological role, excises uracil residues from the DNA which can arise as a result of misincorporation of dUMP residues by DNA polymerase or due to deamination of cytosine. This chain is Uracil-DNA glycosylase, found in Bacillus pumilus (strain SAFR-032).